The following is a 120-amino-acid chain: uncharacterized protein (120 aa).

2 helical membrane-spanning segments follow: residues 26-46 (PSTSLTIMLSVIAIRILPAGM) and 57-77 (LLFASFLLLSSFHYPITLTLV).

The protein localises to the membrane. This is an uncharacterized protein from Saccharomyces cerevisiae (strain ATCC 204508 / S288c) (Baker's yeast).